Reading from the N-terminus, the 267-residue chain is Phosphonoacetaldehyde hydrolase (267 aa).

Asp-10 functions as the Nucleophile in the catalytic mechanism. Asp-10 and Ala-12 together coordinate Mg(2+). Lys-51 acts as the Schiff-base intermediate with substrate in catalysis. Residue Asp-184 coordinates Mg(2+).

The protein belongs to the HAD-like hydrolase superfamily. PhnX family. In terms of assembly, homodimer. Mg(2+) is required as a cofactor.

It carries out the reaction phosphonoacetaldehyde + H2O = acetaldehyde + phosphate + H(+). In terms of biological role, involved in phosphonate degradation. The chain is Phosphonoacetaldehyde hydrolase from Paraburkholderia xenovorans (strain LB400).